The primary structure comprises 255 residues: 4-hydroxy-tetrahydrodipicolinate reductase (255 aa).

NAD(+) is bound by residues 9–14, 89–91, and 115–118; these read GFKGRM, GTT, and APNF. Residue histidine 145 is the Proton donor/acceptor of the active site. Histidine 146 is a (S)-2,3,4,5-tetrahydrodipicolinate binding site. Lysine 149 functions as the Proton donor in the catalytic mechanism. 155-156 is a binding site for (S)-2,3,4,5-tetrahydrodipicolinate; the sequence is GT.

It belongs to the DapB family.

It is found in the cytoplasm. It catalyses the reaction (S)-2,3,4,5-tetrahydrodipicolinate + NAD(+) + H2O = (2S,4S)-4-hydroxy-2,3,4,5-tetrahydrodipicolinate + NADH + H(+). The enzyme catalyses (S)-2,3,4,5-tetrahydrodipicolinate + NADP(+) + H2O = (2S,4S)-4-hydroxy-2,3,4,5-tetrahydrodipicolinate + NADPH + H(+). The protein operates within amino-acid biosynthesis; L-lysine biosynthesis via DAP pathway; (S)-tetrahydrodipicolinate from L-aspartate: step 4/4. Catalyzes the conversion of 4-hydroxy-tetrahydrodipicolinate (HTPA) to tetrahydrodipicolinate. This chain is 4-hydroxy-tetrahydrodipicolinate reductase, found in Streptococcus mutans serotype c (strain ATCC 700610 / UA159).